The sequence spans 524 residues: Cytochrome P450 4F1 (524 aa).

Residues 15 to 35 traverse the membrane as a helical segment; that stretch reads VAFPWQTLLLFGASWILAQIL. Heme contacts are provided by Glu-328 and Cys-468.

The protein belongs to the cytochrome P450 family. Heme serves as cofactor. In terms of tissue distribution, expressed in liver.

It is found in the endoplasmic reticulum membrane. The protein localises to the microsome membrane. The catalysed reaction is (5Z,8Z,11Z,14Z)-eicosatetraenoate + reduced [NADPH--hemoprotein reductase] + O2 = 20-hydroxy-(5Z,8Z,11Z,14Z)-eicosatetraenoate + oxidized [NADPH--hemoprotein reductase] + H2O + H(+). It catalyses the reaction 5-hydroxy-(6E,8Z,11Z,14Z)-eicosatetraenoate + reduced [NADPH--hemoprotein reductase] + O2 = 5,20-dihydroxy-(6E,8Z,11Z,14Z)-eicosatetraenoate + oxidized [NADPH--hemoprotein reductase] + H2O + H(+). The enzyme catalyses 8-hydroxy-(5Z,9E,11Z,14Z)-eicosatetraenoate + reduced [NADPH--hemoprotein reductase] + O2 = 8,20-dihydroxy-(5Z,9E,11Z,14Z)-eicosatetraenoate + oxidized [NADPH--hemoprotein reductase] + H2O + H(+). It carries out the reaction leukotriene B4 + reduced [NADPH--hemoprotein reductase] + O2 = 20-hydroxy-leukotriene B4 + oxidized [NADPH--hemoprotein reductase] + H2O + H(+). The catalysed reaction is 6-trans-leukotriene B4 + reduced [NADPH--hemoprotein reductase] + O2 = 20-hydroxy-6-trans-leukotriene B4 + oxidized [NADPH--hemoprotein reductase] + H2O + H(+). It catalyses the reaction lipoxin A4 + reduced [NADPH--hemoprotein reductase] + O2 = 20-hydroxy-lipoxin A4 + oxidized [NADPH--hemoprotein reductase] + H2O + H(+). A cytochrome P450 monooxygenase involved in the metabolism of arachidonic acid and its oxygenated derivatives. Mechanistically, uses molecular oxygen inserting one oxygen atom into a substrate, and reducing the second into a water molecule, with two electrons provided by NADPH via cytochrome P450 reductase (CPR; NADPH-ferrihemoprotein reductase). Participates in the conversion of arachidonic acid to omega-hydroxyeicosatetraenoic acid (20-HETE), a signaling molecule acting both as vasoconstrictive and natriuretic with overall effect on arterial blood pressure. May play a role in the oxidative inactivation of eicosanoids, including both pro-inflammatory and anti-inflammatory mediators such as leukotriene B4 (LTB4), lipoxin A4 (LXA4), and several HETEs. In Rattus norvegicus (Rat), this protein is Cytochrome P450 4F1.